The primary structure comprises 334 residues: Formamidase (334 aa).

The CN hydrolase domain maps to 14–260; sequence FLVAAIQFPV…WEIVTGEIYP (247 aa). E60 functions as the Proton acceptor in the catalytic mechanism. The Proton donor role is filled by K133. The active-site Nucleophile is the C166.

This sequence belongs to the carbon-nitrogen hydrolase superfamily. Aliphatic amidase family. As to quaternary structure, homotetramer.

The enzyme catalyses formamide + H2O = formate + NH4(+). Its activity is regulated as follows. Inhibited by iodoacetate. Appears to be regulated by the fur protein, but this effect is not mediated at the transcriptional level. Is an aliphatic amidase with a restricted substrate specificity, as it only hydrolyzes formamide. Probably involved in the nitrogen metabolism of H.pylori. In Helicobacter pylori (strain ATCC 700392 / 26695) (Campylobacter pylori), this protein is Formamidase (amiF).